A 664-amino-acid polypeptide reads, in one-letter code: Protein-arginine deiminase type-3 (664 aa).

Belongs to the protein arginine deiminase family. It depends on Ca(2+) as a cofactor. Hair follicles, and epidermis at very low levels.

It is found in the cytoplasm. It catalyses the reaction L-arginyl-[protein] + H2O = L-citrullyl-[protein] + NH4(+). Its function is as follows. Catalyzes the deimination of arginine residues of proteins. The polypeptide is Protein-arginine deiminase type-3 (PADI3) (Homo sapiens (Human)).